The chain runs to 311 residues: HPr kinase/phosphorylase (311 aa).

Residues His138 and Lys159 contribute to the active site. 153 to 160 (GDSGIGKS) lines the ATP pocket. Residue Ser160 coordinates Mg(2+). The Proton acceptor; for phosphorylation activity. Proton donor; for dephosphorylation activity role is filled by Asp177. The important for the catalytic mechanism of both phosphorylation and dephosphorylation stretch occupies residues 201–210 (LEIRGVGIID). Glu202 contributes to the Mg(2+) binding site. Arg243 is a catalytic residue. Residues 264–269 (PVKTGR) are important for the catalytic mechanism of dephosphorylation.

The protein belongs to the HPrK/P family. As to quaternary structure, homohexamer. The cofactor is Mg(2+).

The enzyme catalyses [HPr protein]-L-serine + ATP = [HPr protein]-O-phospho-L-serine + ADP + H(+). The catalysed reaction is [HPr protein]-O-phospho-L-serine + phosphate + H(+) = [HPr protein]-L-serine + diphosphate. Functionally, catalyzes the ATP- as well as the pyrophosphate-dependent phosphorylation of a specific serine residue in HPr, a phosphocarrier protein of the phosphoenolpyruvate-dependent sugar phosphotransferase system (PTS). HprK/P also catalyzes the pyrophosphate-producing, inorganic phosphate-dependent dephosphorylation (phosphorolysis) of seryl-phosphorylated HPr (P-Ser-HPr). The two antagonistic activities of HprK/P are regulated by several intracellular metabolites, which change their concentration in response to the absence or presence of rapidly metabolisable carbon sources (glucose, fructose, etc.) in the growth medium. Therefore, by controlling the phosphorylation state of HPr, HPrK/P is a sensor enzyme that plays a major role in the regulation of carbon metabolism and sugar transport: it mediates carbon catabolite repression (CCR), and regulates PTS-catalyzed carbohydrate uptake and inducer exclusion. In Streptococcus gordonii (strain Challis / ATCC 35105 / BCRC 15272 / CH1 / DL1 / V288), this protein is HPr kinase/phosphorylase.